A 331-amino-acid chain; its full sequence is Probable transcriptional regulatory protein At2g25830 (331 aa).

It belongs to the TACO1 family.

This Arabidopsis thaliana (Mouse-ear cress) protein is Probable transcriptional regulatory protein At2g25830.